A 490-amino-acid polypeptide reads, in one-letter code: Cardiolipin synthase A (490 aa).

Helical transmembrane passes span Tyr4–Val24 and Ala39–Leu59. 2 consecutive PLD phosphodiesterase domains span residues Met220 to Tyr247 and Lys403 to Ser430. Residues His225, Lys227, Asp232, His408, Lys410, and Asp415 contribute to the active site.

This sequence belongs to the phospholipase D family. Cardiolipin synthase subfamily. ClsA sub-subfamily.

The protein localises to the cell membrane. The enzyme catalyses 2 a 1,2-diacyl-sn-glycero-3-phospho-(1'-sn-glycerol) = a cardiolipin + glycerol. Functionally, catalyzes the reversible phosphatidyl group transfer from one phosphatidylglycerol molecule to another to form cardiolipin (CL) (diphosphatidylglycerol) and glycerol. The polypeptide is Cardiolipin synthase A (Buchnera aphidicola subsp. Baizongia pistaciae (strain Bp)).